The chain runs to 299 residues: Tyrosine recombinase XerC (299 aa).

In terms of domain architecture, Core-binding (CB) spans 1–85 (MKRQLEAYCA…AVRGLYRYLN (85 aa)). One can recognise a Tyr recombinase domain in the interval 106–285 (RLPKVLDTDR…DFQHLAAVYD (180 aa)). Catalysis depends on residues arginine 146, lysine 170, histidine 237, arginine 240, and histidine 263. The active-site O-(3'-phospho-DNA)-tyrosine intermediate is the tyrosine 272.

Belongs to the 'phage' integrase family. XerC subfamily. In terms of assembly, forms a cyclic heterotetrameric complex composed of two molecules of XerC and two molecules of XerD.

It localises to the cytoplasm. Functionally, site-specific tyrosine recombinase, which acts by catalyzing the cutting and rejoining of the recombining DNA molecules. The XerC-XerD complex is essential to convert dimers of the bacterial chromosome into monomers to permit their segregation at cell division. It also contributes to the segregational stability of plasmids. The sequence is that of Tyrosine recombinase XerC from Pseudomonas putida (strain ATCC 700007 / DSM 6899 / JCM 31910 / BCRC 17059 / LMG 24140 / F1).